We begin with the raw amino-acid sequence, 343 residues long: L-rhamnose-proton symporter (343 aa).

The next 10 membrane-spanning stretches (helical) occupy residues Ala4–Ala24, Trp38–Leu58, Phe68–Ile88, Met101–Leu121, Thr137–Leu157, Leu175–Ala195, Ile207–Ile227, Leu254–Phe274, Met289–Leu309, and Val320–Gly340.

The protein belongs to the L-rhamnose transporter (TC 2.A.7.6) family.

Its subcellular location is the cell inner membrane. It carries out the reaction L-rhamnopyranose(in) + H(+)(in) = L-rhamnopyranose(out) + H(+)(out). Its function is as follows. Uptake of L-rhamnose across the cytoplasmic membrane with the concomitant transport of protons into the cell (symport system). The polypeptide is L-rhamnose-proton symporter (Yersinia pestis bv. Antiqua (strain Antiqua)).